The chain runs to 340 residues: Probable dual-specificity RNA methyltransferase RlmN (340 aa).

The Proton acceptor role is filled by E91. The 230-residue stretch at 97–326 (HSGRVTACIS…CEIRKEKGTD (230 aa)) folds into the Radical SAM core domain. The cysteines at positions 104 and 331 are disulfide-linked. [4Fe-4S] cluster contacts are provided by C111, C115, and C118. S-adenosyl-L-methionine contacts are provided by residues 158-159 (GE), S190, 213-215 (SLH), and N289. The S-methylcysteine intermediate role is filled by C331.

The protein belongs to the radical SAM superfamily. RlmN family. The cofactor is [4Fe-4S] cluster.

The protein resides in the cytoplasm. It carries out the reaction adenosine(2503) in 23S rRNA + 2 reduced [2Fe-2S]-[ferredoxin] + 2 S-adenosyl-L-methionine = 2-methyladenosine(2503) in 23S rRNA + 5'-deoxyadenosine + L-methionine + 2 oxidized [2Fe-2S]-[ferredoxin] + S-adenosyl-L-homocysteine. The enzyme catalyses adenosine(37) in tRNA + 2 reduced [2Fe-2S]-[ferredoxin] + 2 S-adenosyl-L-methionine = 2-methyladenosine(37) in tRNA + 5'-deoxyadenosine + L-methionine + 2 oxidized [2Fe-2S]-[ferredoxin] + S-adenosyl-L-homocysteine. In terms of biological role, specifically methylates position 2 of adenine 2503 in 23S rRNA and position 2 of adenine 37 in tRNAs. This Thermosipho melanesiensis (strain DSM 12029 / CIP 104789 / BI429) protein is Probable dual-specificity RNA methyltransferase RlmN.